A 352-amino-acid chain; its full sequence is Protein RecA (352 aa).

67-74 (GPESSGKT) is a binding site for ATP. The interval 332–352 (VKPADAESKEDSPKLKAVDGF) is disordered. The segment covering 335-352 (ADAESKEDSPKLKAVDGF) has biased composition (basic and acidic residues).

This sequence belongs to the RecA family.

The protein resides in the cytoplasm. Functionally, can catalyze the hydrolysis of ATP in the presence of single-stranded DNA, the ATP-dependent uptake of single-stranded DNA by duplex DNA, and the ATP-dependent hybridization of homologous single-stranded DNAs. It interacts with LexA causing its activation and leading to its autocatalytic cleavage. This Pseudarthrobacter chlorophenolicus (strain ATCC 700700 / DSM 12829 / CIP 107037 / JCM 12360 / KCTC 9906 / NCIMB 13794 / A6) (Arthrobacter chlorophenolicus) protein is Protein RecA.